We begin with the raw amino-acid sequence, 138 residues long: Transcription antitermination protein NusB (138 aa).

Belongs to the NusB family.

Functionally, involved in transcription antitermination. Required for transcription of ribosomal RNA (rRNA) genes. Binds specifically to the boxA antiterminator sequence of the ribosomal RNA (rrn) operons. The protein is Transcription antitermination protein NusB of Alkaliphilus oremlandii (strain OhILAs) (Clostridium oremlandii (strain OhILAs)).